A 177-amino-acid polypeptide reads, in one-letter code: MSELTTIARPYAKAAFDFAIEQNAVEKWANMLHFSSELIKDETMQTFLKSSLSASKLADTVISICGEQLDQYGQNLIRLMAENKRLEVLPAIYQAFQHYVEEHQKVAEVQVISAQPLNATQEQKIASAMEKRLARKVKLNCSLDSSLIAGVIIRTDDFVIDGSSRGQLSRLANELQL.

This sequence belongs to the ATPase delta chain family. F-type ATPases have 2 components, F(1) - the catalytic core - and F(0) - the membrane proton channel. F(1) has five subunits: alpha(3), beta(3), gamma(1), delta(1), epsilon(1). F(0) has three main subunits: a(1), b(2) and c(10-14). The alpha and beta chains form an alternating ring which encloses part of the gamma chain. F(1) is attached to F(0) by a central stalk formed by the gamma and epsilon chains, while a peripheral stalk is formed by the delta and b chains.

It localises to the cell inner membrane. F(1)F(0) ATP synthase produces ATP from ADP in the presence of a proton or sodium gradient. F-type ATPases consist of two structural domains, F(1) containing the extramembraneous catalytic core and F(0) containing the membrane proton channel, linked together by a central stalk and a peripheral stalk. During catalysis, ATP synthesis in the catalytic domain of F(1) is coupled via a rotary mechanism of the central stalk subunits to proton translocation. Its function is as follows. This protein is part of the stalk that links CF(0) to CF(1). It either transmits conformational changes from CF(0) to CF(1) or is implicated in proton conduction. This chain is ATP synthase subunit delta, found in Pasteurella multocida (strain Pm70).